Here is a 311-residue protein sequence, read N- to C-terminus: L-lactate dehydrogenase 2 (311 aa).

3 residues coordinate NAD(+): valine 14, aspartate 35, and arginine 40. Arginine 90 serves as a coordination point for substrate. NAD(+) contacts are provided by residues serine 103, 120–122 (ATN), and threonine 145. 122–125 (NPCD) is a binding site for substrate. 150 to 153 (DTTR) is a binding site for substrate. The active-site Proton acceptor is the histidine 177. Threonine 230 serves as a coordination point for substrate.

The protein belongs to the LDH/MDH superfamily. LDH family. As to quaternary structure, homotetramer.

It is found in the cytoplasm. The catalysed reaction is (S)-lactate + NAD(+) = pyruvate + NADH + H(+). It participates in fermentation; pyruvate fermentation to lactate; (S)-lactate from pyruvate: step 1/1. In terms of biological role, catalyzes the conversion of lactate to pyruvate. This chain is L-lactate dehydrogenase 2, found in Listeria monocytogenes serotype 4b (strain F2365).